The primary structure comprises 691 residues: tRNA-dihydrouridine(47) synthase [NAD(P)(+)]-like (691 aa).

Ser-2 is modified (N-acetylserine). The tract at residues 55-94 (PPPPSRSVKQNDAADVRAPQSGLVQEKKSKRQLKRERREQ) is disordered. C3H1-type zinc fingers lie at residues 94–125 (QSTI…HDIE) and 138–163 (QCPF…HRDI). Positions 259–286 (LETEEVRPMKKAKSEDQKNSKTGDVGGV) are disordered. Positions 262-279 (EEVRPMKKAKSEDQKNSK) are enriched in basic and acidic residues. Residues 344 to 346 (PLT) and Gln-398 each bind FMN. Cys-429 acts as the Proton donor in catalysis. Residues Lys-468, His-498, 531–533 (NGD), and 556–557 (AR) contribute to the FMN site.

It belongs to the Dus family. Dus3 subfamily. FMN is required as a cofactor.

The enzyme catalyses 5,6-dihydrouridine(47) in tRNA + NAD(+) = uridine(47) in tRNA + NADH + H(+). It carries out the reaction 5,6-dihydrouridine(47) in tRNA + NADP(+) = uridine(47) in tRNA + NADPH + H(+). The catalysed reaction is a 5,6-dihydrouridine in mRNA + NAD(+) = a uridine in mRNA + NADH + H(+). It catalyses the reaction a 5,6-dihydrouridine in mRNA + NADP(+) = a uridine in mRNA + NADPH + H(+). Functionally, catalyzes the synthesis of dihydrouridine, a modified base found in the D-loop of most tRNAs. Specifically modifies U47 in cytoplasmic tRNAs. Catalyzes the synthesis of dihydrouridine in some mRNAs, thereby affecting their translation. This Arabidopsis thaliana (Mouse-ear cress) protein is tRNA-dihydrouridine(47) synthase [NAD(P)(+)]-like.